The sequence spans 301 residues: UDP-N-acetylenolpyruvoylglucosamine reductase (301 aa).

The FAD-binding PCMH-type domain maps to 27–194 (RVGGPADVVF…LDAIFEGTPD (168 aa)). Arg172 is an active-site residue. Catalysis depends on Ser223, which acts as the Proton donor. Glu293 is a catalytic residue.

Belongs to the MurB family. FAD is required as a cofactor.

The protein resides in the cytoplasm. The enzyme catalyses UDP-N-acetyl-alpha-D-muramate + NADP(+) = UDP-N-acetyl-3-O-(1-carboxyvinyl)-alpha-D-glucosamine + NADPH + H(+). The protein operates within cell wall biogenesis; peptidoglycan biosynthesis. Functionally, cell wall formation. This is UDP-N-acetylenolpyruvoylglucosamine reductase from Caulobacter vibrioides (strain NA1000 / CB15N) (Caulobacter crescentus).